The sequence spans 176 residues: MSEPQRLFFAIDLPAEIREQIIHWRATHFPPEAGRPVAADNLHLTLAFLGEVSAEKEKALSLLAGRIRQPGFTLTLDDAGQWLRSRVVWLGMRQPPRGLIQLANMLRSQAARSGCFQSNRPFHPHITLLRDASEAVTIPPPGFNWSYAVTEFTLYASSFARGRTRYTPLKRWALTQ.

The Proton donor role is filled by His-43. 2 consecutive short sequence motifs (HXTX) follow at residues 43-46 (HLTL) and 125-128 (HITL). Residue His-125 is the Proton acceptor of the active site.

This sequence belongs to the 2H phosphoesterase superfamily. ThpR family. In terms of assembly, monomer.

The enzyme catalyses a 3'-end 2',3'-cyclophospho-ribonucleotide-RNA + H2O = a 3'-end 2'-phospho-ribonucleotide-RNA + H(+). Hydrolyzes RNA 2',3'-cyclic phosphodiester to an RNA 2'-phosphomonoester. In vitro, can also ligate 5' and 3' half-tRNA molecules with 2',3'-cyclic phosphate and 5'-hydroxyl termini, respectively, to the product containing the 2'-5' phosphodiester linkage. This reaction does not require ATP and is reversible. This chain is RNA 2',3'-cyclic phosphodiesterase, found in Escherichia coli (strain K12).